The primary structure comprises 210 residues: Quaternary-amine-specific corrinoid protein (210 aa).

The B12-binding N-terminal domain occupies Met-1–Ala-90. The B12-binding domain occupies Ala-90 to Gly-210. His-103 lines the methylcob(III)alamin pocket.

This sequence belongs to the methylamine corrinoid protein family. In terms of assembly, the proline betaine:THF methyl transfer system is composed of two methyltransferases, MtpB and MtqA, and the corrinoid protein MtqC. The L-carnitine:THF methyl transfer system is composed of two methyltransferases, MtcB and MtqA, and the corrinoid protein MtqC.

Involved in the degradation of the quaternary amines L-proline betaine and L-carnitine. Component of a corrinoid-dependent methyltransferase system that transfers a methyl group from L-proline betaine or L-carnitine to tetrahydrofolate (THF), forming methyl-THF, a key intermediate in the Wood-Ljungdahl acetogenesis pathway. Acts as a methyl group carrier between MtpB or MtcB, and MtqA. A methyl group from L-proline betaine or L-carnitine is first transferred to the corrinoid prosthetic group of MtqC by MtpB or MtcB, respectively, and then transferred from MtqC to THF by MtqA. This chain is Quaternary-amine-specific corrinoid protein, found in Eubacterium limosum.